A 372-amino-acid polypeptide reads, in one-letter code: Chaperone protein DnaJ (372 aa).

The region spanning 5-70 is the J domain; sequence DFYEVLGVTK…QKRAAYDRYG (66 aa). Residues 129 to 207 form a CR-type zinc finger; it reads GKLASLTLPT…CGGAGRVTRE (79 aa). Residues Cys-142, Cys-145, Cys-159, Cys-162, Cys-181, Cys-184, Cys-195, and Cys-198 each coordinate Zn(2+). CXXCXGXG motif repeat units lie at residues 142–149, 159–166, 181–188, and 195–202; these read CEACDGTG, CPTCGGQG, CPQCHGRG, and CQACGGAG.

Belongs to the DnaJ family. As to quaternary structure, homodimer. Requires Zn(2+) as cofactor.

The protein localises to the cytoplasm. Functionally, participates actively in the response to hyperosmotic and heat shock by preventing the aggregation of stress-denatured proteins and by disaggregating proteins, also in an autonomous, DnaK-independent fashion. Unfolded proteins bind initially to DnaJ; upon interaction with the DnaJ-bound protein, DnaK hydrolyzes its bound ATP, resulting in the formation of a stable complex. GrpE releases ADP from DnaK; ATP binding to DnaK triggers the release of the substrate protein, thus completing the reaction cycle. Several rounds of ATP-dependent interactions between DnaJ, DnaK and GrpE are required for fully efficient folding. Also involved, together with DnaK and GrpE, in the DNA replication of plasmids through activation of initiation proteins. This is Chaperone protein DnaJ from Beijerinckia indica subsp. indica (strain ATCC 9039 / DSM 1715 / NCIMB 8712).